The following is a 404-amino-acid chain: Tryptophan synthase beta chain (404 aa).

N6-(pyridoxal phosphate)lysine is present on lysine 98.

This sequence belongs to the TrpB family. As to quaternary structure, tetramer of two alpha and two beta chains. Pyridoxal 5'-phosphate is required as a cofactor.

It catalyses the reaction (1S,2R)-1-C-(indol-3-yl)glycerol 3-phosphate + L-serine = D-glyceraldehyde 3-phosphate + L-tryptophan + H2O. It functions in the pathway amino-acid biosynthesis; L-tryptophan biosynthesis; L-tryptophan from chorismate: step 5/5. The beta subunit is responsible for the synthesis of L-tryptophan from indole and L-serine. This chain is Tryptophan synthase beta chain, found in Rhodopseudomonas palustris (strain BisB5).